Here is a 681-residue protein sequence, read N- to C-terminus: Transmembrane protein 214-A (681 aa).

2 disordered regions span residues 1–41 and 58–99; these read MASG…GTAP and KKQN…GSRQ. 2 N-linked (GlcNAc...) asparagine glycosylation sites follow: asparagine 300 and asparagine 324. 2 helical membrane-spanning segments follow: residues 471-491 and 608-628; these read GFPWRRLIVIAFVFLFGFVFY and LLLHLHRTYLLPAVTYLEAAV.

Belongs to the TMEM214 family. Constitutively interacts with CASP4; required for the localization of procaspase 4 to the ER.

Its subcellular location is the endoplasmic reticulum membrane. Functionally, critical mediator, in cooperation with CASP4, of endoplasmic reticulum-stress induced apoptosis. Required or the activation of CASP4 following endoplasmic reticulum stress. The sequence is that of Transmembrane protein 214-A (tmem214-a) from Xenopus laevis (African clawed frog).